The following is a 91-amino-acid chain: UPF0512 protein M (91 aa).

This sequence belongs to the UPF0512 family.

This chain is UPF0512 protein M, found in Dictyostelium discoideum (Social amoeba).